Consider the following 397-residue polypeptide: Acetate kinase (397 aa).

Asparagine 7 is a Mg(2+) binding site. ATP is bound at residue lysine 14. Residue arginine 91 coordinates substrate. Aspartate 148 (proton donor/acceptor) is an active-site residue. ATP-binding positions include 208–212 (HLGNG), 283–285 (DLR), and 331–335 (GVGEN). Residue glutamate 384 participates in Mg(2+) binding.

Belongs to the acetokinase family. Homodimer. Requires Mg(2+) as cofactor. Mn(2+) serves as cofactor.

The protein localises to the cytoplasm. The catalysed reaction is acetate + ATP = acetyl phosphate + ADP. Its pathway is metabolic intermediate biosynthesis; acetyl-CoA biosynthesis; acetyl-CoA from acetate: step 1/2. Catalyzes the formation of acetyl phosphate from acetate and ATP. Can also catalyze the reverse reaction. This is Acetate kinase from Syntrophomonas wolfei subsp. wolfei (strain DSM 2245B / Goettingen).